The following is a 648-amino-acid chain: Macrolide export ATP-binding/permease protein MacB (648 aa).

Residues 5-243 (LELCNVSRSY…QGVDAAVVNT (239 aa)) form the ABC transporter domain. 41–48 (GVSGSGKS) contributes to the ATP binding site. A run of 5 helical transmembrane segments spans residues 273 to 293 (LLTM…VVVG), 417 to 437 (ANVV…IGVA), 523 to 543 (LFLT…VMNI), 577 to 597 (VLVC…IAFM), and 611 to 631 (LTAL…FGWL).

Belongs to the ABC transporter superfamily. Macrolide exporter (TC 3.A.1.122) family. Homodimer. Part of the tripartite efflux system MacAB-TolC, which is composed of an inner membrane transporter, MacB, a periplasmic membrane fusion protein, MacA, and an outer membrane component, TolC. The complex forms a large protein conduit and can translocate molecules across both the inner and outer membranes. Interacts with MacA.

The protein localises to the cell inner membrane. Part of the tripartite efflux system MacAB-TolC. MacB is a non-canonical ABC transporter that contains transmembrane domains (TMD), which form a pore in the inner membrane, and an ATP-binding domain (NBD), which is responsible for energy generation. Confers resistance against macrolides. This chain is Macrolide export ATP-binding/permease protein MacB, found in Salmonella choleraesuis (strain SC-B67).